The following is a 96-amino-acid chain: Histone-like protein p6 (96 aa).

Residues 1–19 mediate DNA binding; that stretch reads MAKMMQREITKTTVNVAKM.

This sequence belongs to the phi29likevirus histone-like protein p6 family. In terms of assembly, homodimer. Homomultimer. Binds to double-stranded DNA giving rise to multimeric nucleoprotein complexes. Binding specificity for the viral DNA is based on supercoiling, the viral genome having a negative superhelicity lower than that of plasmid DNA. Interacts with the DNA replication protein p17; this interaction optimizes the binding of protein p6 at the viral DNA ends, thus favoring the initiation of replication.

In terms of biological role, histone-like nucleoprotein that binds to the viral dsDNA and responsible for wrapping and compacting the viral DNA about 4-fold. Forms a nucleoprotein complex in which the DNA adopts a right-handed toroidal conformation winding around a protein core. Binds ito most, if not all, the viral genome, although with different affinity, the highest one corresponding to the genome ends. The formation of the nucleoprotein complex at the genome ends, activates the initiation of viral DNA replication. The binding of p6 would recruit the complex formed by the TP and the DNA polymerase to the origin. Protein p6 also represses early transcription from promoter C2, and, together with protein p4, represses transcription from promoters A2b and A2c and activates late transcription from promoter A3. Protein p6 is therefore involved in the early to late transcription switch. The formation of the nucleoprotein complex at the right end of the phage genome where the early promoter C2 is located affects local topology, which may contribute to the promoter repression. In Bacillus phage PZA (Bacteriophage PZA), this protein is Histone-like protein p6 (6).